Here is a 329-residue protein sequence, read N- to C-terminus: tRNA dimethylallyltransferase (329 aa).

G12 to T19 contacts ATP. A substrate-binding site is contributed by T14 to T19. Residues D37 to Y40 form an interaction with substrate tRNA region. Positions L306–A329 are disordered. The span at S320–A329 shows a compositional bias: gly residues.

This sequence belongs to the IPP transferase family. In terms of assembly, monomer. Mg(2+) serves as cofactor.

The enzyme catalyses adenosine(37) in tRNA + dimethylallyl diphosphate = N(6)-dimethylallyladenosine(37) in tRNA + diphosphate. Functionally, catalyzes the transfer of a dimethylallyl group onto the adenine at position 37 in tRNAs that read codons beginning with uridine, leading to the formation of N6-(dimethylallyl)adenosine (i(6)A). This Thermomicrobium roseum (strain ATCC 27502 / DSM 5159 / P-2) protein is tRNA dimethylallyltransferase.